Consider the following 493-residue polypeptide: Glutamyl-tRNA(Gln) amidotransferase subunit A (493 aa).

Catalysis depends on charge relay system residues K79 and S159. S183 acts as the Acyl-ester intermediate in catalysis.

The protein belongs to the amidase family. GatA subfamily. As to quaternary structure, heterotrimer of A, B and C subunits.

It carries out the reaction L-glutamyl-tRNA(Gln) + L-glutamine + ATP + H2O = L-glutaminyl-tRNA(Gln) + L-glutamate + ADP + phosphate + H(+). Functionally, allows the formation of correctly charged Gln-tRNA(Gln) through the transamidation of misacylated Glu-tRNA(Gln) in organisms which lack glutaminyl-tRNA synthetase. The reaction takes place in the presence of glutamine and ATP through an activated gamma-phospho-Glu-tRNA(Gln). This Rhizobium johnstonii (strain DSM 114642 / LMG 32736 / 3841) (Rhizobium leguminosarum bv. viciae) protein is Glutamyl-tRNA(Gln) amidotransferase subunit A.